The chain runs to 136 residues: MLQPKRMKFRKMFKGRNRGLANGTEVSFGTFGLKAVGRGRLTARQIESARRAMTRHVKRQGQIWIRVFPDKPITSKPLEVRMGKGKGNVEYWVCQIQPGKVLYEMDGVPESLAREAFALASAKLPIKTTFVTKTVM.

The protein belongs to the universal ribosomal protein uL16 family. As to quaternary structure, part of the 50S ribosomal subunit.

Its function is as follows. Binds 23S rRNA and is also seen to make contacts with the A and possibly P site tRNAs. This is Large ribosomal subunit protein uL16 from Shewanella denitrificans (strain OS217 / ATCC BAA-1090 / DSM 15013).